The sequence spans 138 residues: Acidic phospholipase A2 1 (138 aa).

The N-terminal stretch at 1 to 16 is a signal peptide; sequence MRTLWIVAVWLMGVEG. Intrachain disulfides connect C42-C131, C44-C60, C59-C111, C65-C138, C66-C104, C73-C97, and C91-C102. Ca(2+) contacts are provided by Y43, G45, and G47. H63 is an active-site residue. D64 contacts Ca(2+). D105 is an active-site residue.

In terms of assembly, monomer. Ca(2+) is required as a cofactor. Expressed by the venom gland.

It localises to the secreted. The enzyme catalyses a 1,2-diacyl-sn-glycero-3-phosphocholine + H2O = a 1-acyl-sn-glycero-3-phosphocholine + a fatty acid + H(+). Snake venom phospholipase that inhibits ADP- and collagen-induced human platelet aggregation. This inhibition is completely inhibited by abolition of catalytic activity in case of collagen as inducer and partially inhibited in case of ADP as inducer. PLA2 catalyzes the calcium-dependent hydrolysis of the 2-acyl groups in 3-sn-phosphoglycerides. This chain is Acidic phospholipase A2 1, found in Macrovipera lebetinus (Levantine viper).